The primary structure comprises 46 residues: Defensin-like protein AX1 (46 aa).

4 disulfides stabilise this stretch: C3–C46, C14–C34, C20–C40, and C24–C42.

Leaves and flowers.

Its function is as follows. Strong inhibiting activity against C.beticola and other filamentous fungi. Little or no effect against bacteria. This Beta vulgaris (Sugar beet) protein is Defensin-like protein AX1.